Here is a 491-residue protein sequence, read N- to C-terminus: Glycogen synthase (491 aa).

Lys15 is a binding site for ADP-alpha-D-glucose.

This sequence belongs to the glycosyltransferase 1 family. Bacterial/plant glycogen synthase subfamily.

It catalyses the reaction [(1-&gt;4)-alpha-D-glucosyl](n) + ADP-alpha-D-glucose = [(1-&gt;4)-alpha-D-glucosyl](n+1) + ADP + H(+). The protein operates within glycan biosynthesis; glycogen biosynthesis. Synthesizes alpha-1,4-glucan chains using ADP-glucose. The sequence is that of Glycogen synthase from Hydrogenovibrio crunogenus (strain DSM 25203 / XCL-2) (Thiomicrospira crunogena).